We begin with the raw amino-acid sequence, 410 residues long: LL-diaminopimelate aminotransferase (410 aa).

Tyr-15 and Gly-42 together coordinate substrate. Residues Tyr-72, 108 to 109, Tyr-132, Asn-187, Tyr-218, and 246 to 248 contribute to the pyridoxal 5'-phosphate site; these read AK and SFS. The substrate site is built by Lys-109, Tyr-132, and Asn-187. Lys-249 is modified (N6-(pyridoxal phosphate)lysine). Pyridoxal 5'-phosphate contacts are provided by Arg-257 and Asn-292. Residues Asn-292 and Arg-388 each contribute to the substrate site.

The protein belongs to the class-I pyridoxal-phosphate-dependent aminotransferase family. LL-diaminopimelate aminotransferase subfamily. In terms of assembly, homodimer. Pyridoxal 5'-phosphate serves as cofactor.

The enzyme catalyses (2S,6S)-2,6-diaminopimelate + 2-oxoglutarate = (S)-2,3,4,5-tetrahydrodipicolinate + L-glutamate + H2O + H(+). The protein operates within amino-acid biosynthesis; L-lysine biosynthesis via DAP pathway; LL-2,6-diaminopimelate from (S)-tetrahydrodipicolinate (aminotransferase route): step 1/1. Functionally, involved in the synthesis of meso-diaminopimelate (m-DAP or DL-DAP), required for both lysine and peptidoglycan biosynthesis. Catalyzes the direct conversion of tetrahydrodipicolinate to LL-diaminopimelate. Can also use m-DAP instead of LL-DAP as the amino-group donor. This Acetivibrio thermocellus (strain ATCC 27405 / DSM 1237 / JCM 9322 / NBRC 103400 / NCIMB 10682 / NRRL B-4536 / VPI 7372) (Clostridium thermocellum) protein is LL-diaminopimelate aminotransferase.